Reading from the N-terminus, the 515-residue chain is Alpha,alpha-trehalose-phosphate synthase [UDP-forming] 1 (515 aa).

Residues Tyr97 and Asp151 each contribute to the D-glucose 6-phosphate site. 2 residues coordinate UDP: Arg287 and Lys292. Residues Arg287 and Lys292 each contribute to the UDP-alpha-D-glucose site. Arg325 contributes to the D-glucose 6-phosphate binding site. Residues Val364 and 390–394 contribute to the UDP site; that span reads LVAYE. 386 to 394 is a UDP-alpha-D-glucose binding site; sequence DGMNLVAYE. The segment at 483 to 515 is disordered; it reads GKFQSRKAKLPESADAEKPMNGSGESEESQTTQ. Residues 491–500 show a composition bias toward basic and acidic residues; the sequence is KLPESADAEK.

Belongs to the glycosyltransferase 20 family.

The enzyme catalyses D-glucose 6-phosphate + UDP-alpha-D-glucose = alpha,alpha-trehalose 6-phosphate + UDP + H(+). The protein operates within carbohydrate biosynthesis. Its function is as follows. Synthase catalytic subunit of the trehalose synthase complex that catalyzes the production of trehalose from glucose-6-phosphate and UDP-alpha-D-glucose in a two step process. The disaccharide trehalose serves as a storage carbohydrate that is mobilized during conidial germination. Regulates the level of trehalose as a protectant for cell integrity during thermal and oxidative stress. This Aspergillus fumigatus (strain ATCC MYA-4609 / CBS 101355 / FGSC A1100 / Af293) (Neosartorya fumigata) protein is Alpha,alpha-trehalose-phosphate synthase [UDP-forming] 1.